The chain runs to 88 residues: DNA-directed RNA polymerase subunit omega (88 aa).

This sequence belongs to the RNA polymerase subunit omega family. The RNAP catalytic core consists of 2 alpha, 1 beta, 1 beta' and 1 omega subunit. When a sigma factor is associated with the core the holoenzyme is formed, which can initiate transcription.

It catalyses the reaction RNA(n) + a ribonucleoside 5'-triphosphate = RNA(n+1) + diphosphate. Its function is as follows. Promotes RNA polymerase assembly. Latches the N- and C-terminal regions of the beta' subunit thereby facilitating its interaction with the beta and alpha subunits. This Salinispora tropica (strain ATCC BAA-916 / DSM 44818 / JCM 13857 / NBRC 105044 / CNB-440) protein is DNA-directed RNA polymerase subunit omega.